Consider the following 543-residue polypeptide: MPPPLQAHRLLISHRRLPTPARRRFTAASSVQSAPATTLAPGPATSSILSIRESLLSGERTAADITSEYLSRLRRTEPTLRSFIHVADAAAEREAEELDRRIASGEKDAVGPLAGVLVGVKDNLCTANMPSTGGSRILDGYRPAYDATAVRRLREAGAIVLGKTNLDEFGMGSTTEGSAFQVTTNPWDDSRVPGGSSGGSAAAVSARQCVVSLGSDTGGSVRQPASFCGVVGLKPTYGRVSRFGLMAYASSLDVVGCFGSSVFDTATILSVVAGHDKMDATSSSQVVPEYASELVSLDLLESKPLNGVRIGIIQETLGEGVASGVVSSIKGAASHLEQLGSVVEEVSLPSFSLGLPAYYILASSEASSNLSRYDGIRYGGQVSADDLNELYGESRANGFGHEVKMRILMGTYALSAGYYDAYYKRAQQVRTLVKQSFKDALERYDILISPAAPSAAYKIGEKINDPLAMYAGDIMTVNVNLAGLPALVVPCGFVEGGAAGLPVGLQMMGSPFCEGNLLRVGHIFEQTLQNLSFVPPLLAEGQL.

Active-site charge relay system residues include K121 and S196. Catalysis depends on S220, which acts as the Acyl-ester intermediate.

Belongs to the amidase family. GatA subfamily. Subunit of the heterotrimeric GatCAB amidotransferase (AdT) complex, composed of A, B and C subunits.

The protein localises to the mitochondrion. It is found in the plastid. The protein resides in the chloroplast stroma. The catalysed reaction is L-glutamyl-tRNA(Gln) + L-glutamine + ATP + H2O = L-glutaminyl-tRNA(Gln) + L-glutamate + ADP + phosphate + H(+). Functionally, allows the formation of correctly charged Gln-tRNA(Gln) through the transamidation of misacylated Glu-tRNA(Gln) in chloroplasts and mitochondria. The reaction takes place in the presence of glutamine and ATP through an activated gamma-phospho-Glu-tRNA(Gln). This is Glutamyl-tRNA(Gln) amidotransferase subunit A, chloroplastic/mitochondrial from Zea mays (Maize).